The chain runs to 216 residues: Soluble inorganic pyrophosphatase 5 (216 aa).

The tract at residues 1–20 (MNGEEVKTSQPQKKLQNPTP) is disordered. Over residues 8-20 (TSQPQKKLQNPTP) the composition is skewed to polar residues. 2 residues coordinate substrate: K66 and R80. The active-site Proton donor is the Y88. Residue Y92 coordinates substrate. Residues D102, D107, and D139 each contribute to the Mg(2+) site. Y176 lines the substrate pocket.

This sequence belongs to the PPase family. Mg(2+) serves as cofactor.

The protein localises to the cytoplasm. The catalysed reaction is diphosphate + H2O = 2 phosphate + H(+). The chain is Soluble inorganic pyrophosphatase 5 from Arabidopsis thaliana (Mouse-ear cress).